The chain runs to 214 residues: tRNA (guanine-N(7)-)-methyltransferase (214 aa).

S-adenosyl-L-methionine contacts are provided by Glu43, Glu68, Asp95, and Asp117. Residue Asp117 is part of the active site. Substrate contacts are provided by residues Lys121, Asp153, and 190 to 193 (TEYE).

It belongs to the class I-like SAM-binding methyltransferase superfamily. TrmB family.

It carries out the reaction guanosine(46) in tRNA + S-adenosyl-L-methionine = N(7)-methylguanosine(46) in tRNA + S-adenosyl-L-homocysteine. It participates in tRNA modification; N(7)-methylguanine-tRNA biosynthesis. Its function is as follows. Catalyzes the formation of N(7)-methylguanine at position 46 (m7G46) in tRNA. The sequence is that of tRNA (guanine-N(7)-)-methyltransferase from Staphylococcus aureus (strain MSSA476).